The chain runs to 217 residues: Adenylate kinase (217 aa).

Position 10 to 15 (10 to 15 (GAGKGT)) interacts with ATP. Positions 30–59 (STGDMFRAAIKAGTALGMKAKEYMDAGSLV) are NMP. Residues Thr-31, Arg-36, 57–59 (SLV), 85–88 (GFPR), and Gln-92 contribute to the AMP site. Residues 126–163 (GRRICRQCGGTYHMVFNPPAAEAVCDKCGGELYQRSDD) form an LID region. Residue Arg-127 participates in ATP binding. 2 residues coordinate Zn(2+): Cys-130 and Cys-133. 136–137 (TY) contacts ATP. Residues Cys-150 and Cys-153 each contribute to the Zn(2+) site. 2 residues coordinate AMP: Arg-160 and Arg-171. ATP is bound at residue Gln-199.

The protein belongs to the adenylate kinase family. In terms of assembly, monomer.

It localises to the cytoplasm. It carries out the reaction AMP + ATP = 2 ADP. The protein operates within purine metabolism; AMP biosynthesis via salvage pathway; AMP from ADP: step 1/1. Catalyzes the reversible transfer of the terminal phosphate group between ATP and AMP. Plays an important role in cellular energy homeostasis and in adenine nucleotide metabolism. This Desulfitobacterium hafniense (strain DSM 10664 / DCB-2) protein is Adenylate kinase.